Here is a 407-residue protein sequence, read N- to C-terminus: Putative serine/threonine-protein kinase C01C4.3 (407 aa).

Residues 33-57 are compositionally biased toward polar residues; the sequence is NQLQNHPPRNATQSPQRQPRTSESS. The disordered stretch occupies residues 33–68; the sequence is NQLQNHPPRNATQSPQRQPRTSESSMDFPRSALRRN. In terms of domain architecture, Protein kinase spans 126-397; the sequence is YTVNKQLGTG…RKCLAKEKLL (272 aa). Residues 132-140 and lysine 155 each bind ATP; that span reads LGTGRFGFI. Catalysis depends on asparagine 251, which acts as the Proton acceptor.

Belongs to the protein kinase superfamily. Ser/Thr protein kinase family.

It catalyses the reaction L-seryl-[protein] + ATP = O-phospho-L-seryl-[protein] + ADP + H(+). It carries out the reaction L-threonyl-[protein] + ATP = O-phospho-L-threonyl-[protein] + ADP + H(+). The protein is Putative serine/threonine-protein kinase C01C4.3 of Caenorhabditis elegans.